The sequence spans 359 residues: N-acetylhexosamine 1-kinase (359 aa).

A Protein kinase domain is found at 21–359; it reads VTGIEPYGDG…IVADIMEAAR (339 aa).

Belongs to the protein kinase superfamily. Mg(2+) is required as a cofactor.

It carries out the reaction N-acetyl-D-hexosamine + ATP = N-acetyl-alpha-D-hexosamine 1-phosphate + ADP + H(+). Phosphorylates both N-acetylglucosamine (GlcNAc) and N-acetylgalactosamine (GalNAc) at similar rates. Involved in the lacto-N-biose I/galacto-N-biose (LNB/GNB) degradation pathway, which is important for host intestinal colonization by bifidobacteria. Also accepts GTP and ITP as phosphate donors. In vitro, can phosphorylate several GlcNAc and GalNAc derivatives. The chain is N-acetylhexosamine 1-kinase (nahK) from Bifidobacterium longum subsp. longum (strain ATCC 15707 / DSM 20219 / JCM 1217 / NCTC 11818 / E194b).